The chain runs to 818 residues: uncharacterized protein (818 aa).

3 stretches are compositionally biased toward low complexity: residues 1-33 (MYNN…NYIS), 44-68 (NNFL…PQQQ), and 97-150 (NNSN…TKSN). Disordered regions lie at residues 1 to 68 (MYNN…PQQQ), 92 to 150 (LNTG…TKSN), 164 to 220 (KLDN…KYHE), 284 to 306 (NMNG…NNSD), and 415 to 445 (NINK…NNNN). Composition is skewed to acidic residues over residues 172–190 (SEEE…EEKE) and 205–214 (DNNSQDEDKE). The segment covering 284–302 (NMNGSSDSSDSSNSSGHSR) has biased composition (low complexity). The helical transmembrane segment at 534 to 554 (IIAIIVIVWPLIANLTYKFIV) threads the bilayer. The interval 779-808 (ANNFMSDSNRSPSSSSSSSSSTSDSENGML) is disordered. The segment covering 784–803 (SDSNRSPSSSSSSSSSTSDS) has biased composition (low complexity).

It localises to the membrane. This is an uncharacterized protein from Dictyostelium discoideum (Social amoeba).